We begin with the raw amino-acid sequence, 290 residues long: Zinc finger AN1 and C2H2 domain-containing stress-associated protein 16 (290 aa).

2 consecutive AN1-type zinc fingers follow at residues 7–55 (PNLG…QKDV) and 95–145 (VTKK…KPES). Zn(2+) is bound by residues C13, C18, C28, C31, C36, H39, H45, C47, C101, C106, C118, C121, C126, H129, H135, and C137. 2 consecutive C2H2-type zinc fingers follow at residues 224-247 (EQCVQCPARFSTVGALIEHCEKSH) and 261-284 (DVCPKCSKAFRDPVLLVEHVERDH).

In terms of biological role, may be involved in environmental stress response. This chain is Zinc finger AN1 and C2H2 domain-containing stress-associated protein 16 (SAP16), found in Oryza sativa subsp. japonica (Rice).